The sequence spans 56 residues: Ovomucoid (56 aa).

The region spanning 6–56 (VDCSDHPKPACLQEQKPLCGSDNKTYDNKCSFCNAVVDSNGTLTLSHFGKC) is the Kazal-like domain. Intrachain disulfides connect cysteine 8–cysteine 38, cysteine 16–cysteine 35, and cysteine 24–cysteine 56. N-linked (GlcNAc...) asparagine glycosylation occurs at asparagine 45.

The protein localises to the secreted. The protein is Ovomucoid of Penelope jacquacu (Spix's guan).